The primary structure comprises 689 residues: MANKEYPLAKFRNIGIMAHIDAGKTTATERILFYTGKTHKIGETHEGGATMDWMEQEQERGITITSAATTCFWKDHQVNIIDTPGHVDFTVEVERSLRVLDGAVTILDAKSGVEPQTETVWRQADNYKVPRMVFINKMDKLGADFLMSVGTLRERLHANAVPLQLPIGAEDAFSGIIDLVKNDAVIYKDDLGTVMDETEIPEDMKEMAEEYRTMLLEAVAEVDEDIMMKYLEGEEISVEEIKTALRKGVLANKIVPVLCGSAYKNKGVQLLLDAIIEFMPSPLDIEDVKGTEPTTGEEMTRPADAKAPLAALAFKIATDPFIGKLAFTRIYSGTMKNGTYVFNSNKGKRERIGRLMKMHANHREEVEELKAGDLGAIIGLKDTTTGDTLCDDADPIILENMEFPEPVIDVSIEPKTKAGQEKMGIALAKLAEEDPTFRTYTNQETGQTIIAGMGELHLEIIVDRLIREFKVECNVGQPQVAYKETVRKHVKAEGKFVRQSGGRGQYGHCWIEMMPTEGEYEFENAIVGGSIPKEYIPAIDNGIQEASQSGIIAGYPVINFKVKLFDGSYHDVDSSEMAFKIAGSMAFKNAMSKADAVLLEPSMKVEVVVPEEYMGDVIGDINSRRGRIEGMTPRAGAEVIRAFVPLSEMFGYATTLRSKTQGRGNYVMQFDHYEEVPKSIQDKVIGERK.

In terms of domain architecture, tr-type G spans 9 to 283; that stretch reads AKFRNIGIMA…AIIEFMPSPL (275 aa). GTP-binding positions include 18–25, 82–86, and 136–139; these read AHIDAGKT, DTPGH, and NKMD.

It belongs to the TRAFAC class translation factor GTPase superfamily. Classic translation factor GTPase family. EF-G/EF-2 subfamily.

It is found in the cytoplasm. Its function is as follows. Catalyzes the GTP-dependent ribosomal translocation step during translation elongation. During this step, the ribosome changes from the pre-translocational (PRE) to the post-translocational (POST) state as the newly formed A-site-bound peptidyl-tRNA and P-site-bound deacylated tRNA move to the P and E sites, respectively. Catalyzes the coordinated movement of the two tRNA molecules, the mRNA and conformational changes in the ribosome. The sequence is that of Elongation factor G from Clostridium botulinum (strain 657 / Type Ba4).